Reading from the N-terminus, the 932-residue chain is Probable serine/threonine-protein kinase clkA (932 aa).

Positions 1-10 are enriched in basic residues; it reads MDRFQTKRKT. 3 disordered regions span residues 1 to 21, 39 to 198, and 212 to 562; these read MDRF…NNDY, YKNN…YGDT, and NDYD…TNTN. 2 stretches are compositionally biased toward low complexity: residues 11 to 21 and 39 to 123; these read YSYNGYSNNDY and YKNN…ENNY. A compositionally biased stretch (polar residues) spans 124–143; sequence FQSENQSNKDQNSYFNSSYL. Low complexity-rich tracts occupy residues 148–196, 218–305, 314–342, and 351–562; these read DNYN…NSYG, NNNN…NGGN, VFNN…NNDY, and NIYS…TNTN. A Protein kinase domain is found at 590–920; the sequence is YKVLCTVGSG…ASDALSHPFL (331 aa). ATP is bound by residues 596–604 and Lys-619; that span reads VGSGTFSTV. Catalysis depends on Asp-719, which acts as the Proton acceptor.

This sequence belongs to the protein kinase superfamily. CMGC Ser/Thr protein kinase family.

The catalysed reaction is L-seryl-[protein] + ATP = O-phospho-L-seryl-[protein] + ADP + H(+). It catalyses the reaction L-threonyl-[protein] + ATP = O-phospho-L-threonyl-[protein] + ADP + H(+). The sequence is that of Probable serine/threonine-protein kinase clkA (clkA) from Dictyostelium discoideum (Social amoeba).